Consider the following 308-residue polypeptide: tRNA dimethylallyltransferase (308 aa).

An ATP-binding site is contributed by 8–15; sequence GATAVGKT. Residue 10–15 coordinates substrate; that stretch reads TAVGKT. The interaction with substrate tRNA stretch occupies residues 33 to 36; the sequence is DSRQ.

The protein belongs to the IPP transferase family. In terms of assembly, monomer. Requires Mg(2+) as cofactor.

The enzyme catalyses adenosine(37) in tRNA + dimethylallyl diphosphate = N(6)-dimethylallyladenosine(37) in tRNA + diphosphate. Its function is as follows. Catalyzes the transfer of a dimethylallyl group onto the adenine at position 37 in tRNAs that read codons beginning with uridine, leading to the formation of N6-(dimethylallyl)adenosine (i(6)A). The sequence is that of tRNA dimethylallyltransferase from Kosmotoga olearia (strain ATCC BAA-1733 / DSM 21960 / TBF 19.5.1).